Consider the following 92-residue polypeptide: Small ribosomal subunit protein uS19 (92 aa).

This sequence belongs to the universal ribosomal protein uS19 family.

Functionally, protein S19 forms a complex with S13 that binds strongly to the 16S ribosomal RNA. The protein is Small ribosomal subunit protein uS19 of Brucella ovis (strain ATCC 25840 / 63/290 / NCTC 10512).